The chain runs to 363 residues: tRNA/tmRNA (uracil-C(5))-methyltransferase (363 aa).

S-adenosyl-L-methionine contacts are provided by Gln187, Tyr215, Asn220, Glu236, and Asp296. Cys321 functions as the Nucleophile in the catalytic mechanism. Glu355 acts as the Proton acceptor in catalysis.

Belongs to the class I-like SAM-binding methyltransferase superfamily. RNA M5U methyltransferase family. TrmA subfamily.

It catalyses the reaction uridine(54) in tRNA + S-adenosyl-L-methionine = 5-methyluridine(54) in tRNA + S-adenosyl-L-homocysteine + H(+). The enzyme catalyses uridine(341) in tmRNA + S-adenosyl-L-methionine = 5-methyluridine(341) in tmRNA + S-adenosyl-L-homocysteine + H(+). Dual-specificity methyltransferase that catalyzes the formation of 5-methyluridine at position 54 (m5U54) in all tRNAs, and that of position 341 (m5U341) in tmRNA (transfer-mRNA). The polypeptide is tRNA/tmRNA (uracil-C(5))-methyltransferase (Haemophilus influenzae (strain 86-028NP)).